The chain runs to 240 residues: Adenosylcobinamide-GDP ribazoletransferase (240 aa).

Helical transmembrane passes span 31 to 51 (LLYY…ASHL), 62 to 81 (ALLL…DGLA), 109 to 129 (IAVV…WVLV), 133 to 153 (IGAQ…GLFL), and 179 to 199 (VLLV…LLAL).

This sequence belongs to the CobS family. It depends on Mg(2+) as a cofactor.

It is found in the cell inner membrane. The catalysed reaction is alpha-ribazole + adenosylcob(III)inamide-GDP = adenosylcob(III)alamin + GMP + H(+). It catalyses the reaction alpha-ribazole 5'-phosphate + adenosylcob(III)inamide-GDP = adenosylcob(III)alamin 5'-phosphate + GMP + H(+). The protein operates within cofactor biosynthesis; adenosylcobalamin biosynthesis; adenosylcobalamin from cob(II)yrinate a,c-diamide: step 7/7. Functionally, joins adenosylcobinamide-GDP and alpha-ribazole to generate adenosylcobalamin (Ado-cobalamin). Also synthesizes adenosylcobalamin 5'-phosphate from adenosylcobinamide-GDP and alpha-ribazole 5'-phosphate. This is Adenosylcobinamide-GDP ribazoletransferase from Pseudomonas putida (strain ATCC 47054 / DSM 6125 / CFBP 8728 / NCIMB 11950 / KT2440).